Here is a 276-residue protein sequence, read N- to C-terminus: Hydroxycinnamoyl-CoA hydratase-lyase (276 aa).

Residues lysine 29, alanine 68, methionine 70, and leucine 72 each contribute to the acetyl-CoA site. Residue tyrosine 75 coordinates vanillin. Glycine 120, serine 142, and tryptophan 146 together coordinate acetyl-CoA. Residues glycine 151 and tyrosine 239 each coordinate vanillin.

This sequence belongs to the enoyl-CoA hydratase/isomerase family. In terms of assembly, homohexamer; dimer of trimers.

It catalyses the reaction (E)-feruloyl-CoA + H2O = vanillin + acetyl-CoA. It carries out the reaction (E)-caffeoyl-CoA + H2O = 3,4-dihydroxybenzaldehyde + acetyl-CoA. The catalysed reaction is (E)-4-coumaroyl-CoA + H2O = 4-hydroxybenzaldehyde + acetyl-CoA. The enzyme catalyses (E)-feruloyl-CoA + H2O = 3-hydroxy-3-(4-hydroxy-3-methoxyphenyl)propanoyl-CoA. It catalyses the reaction 3-hydroxy-3-(4-hydroxy-3-methoxyphenyl)propanoyl-CoA = vanillin + acetyl-CoA. It carries out the reaction (E)-caffeoyl-CoA + H2O = 3-hydroxy-3-(3,4-dihydroxyphenyl)propanoyl-CoA. The catalysed reaction is 3-hydroxy-3-(3,4-dihydroxyphenyl)propanoyl-CoA = 3,4-dihydroxybenzaldehyde + acetyl-CoA. The enzyme catalyses (E)-4-coumaroyl-CoA + H2O = 3-hydroxy-3-(4-hydroxyphenyl)propanoyl-CoA. It catalyses the reaction 3-hydroxy-3-(4-hydroxyphenyl)propanoyl-CoA = 4-hydroxybenzaldehyde + acetyl-CoA. Functionally, catalyzes the hydration of the acyl-CoA thioester of ferulic acid and the subsequent retro-aldol cleavage of the hydrated intermediate to yield vanillin (4-hydroxy-3-methoxy-benzaldehyde). The enzyme is also active with caffeoyl-CoA and 4-coumaroyl-CoA producing 3,4-dihydroxybenzaldehyde and 4-hydroxybenzaldehyde, respectively. This chain is Hydroxycinnamoyl-CoA hydratase-lyase, found in Pseudomonas fluorescens.